The primary structure comprises 348 residues: 4-hydroxy-2-oxovalerate aldolase 2 (348 aa).

Residues 5–256 (LQICDSTLRD…EARIKLFDAL (252 aa)) enclose the Pyruvate carboxyltransferase domain. 13-14 (RD) is a substrate binding site. D14 is a binding site for Mn(2+). The active-site Proton acceptor is the H17. S168 and H195 together coordinate substrate. H195 and H197 together coordinate Mn(2+).

This sequence belongs to the 4-hydroxy-2-oxovalerate aldolase family.

The enzyme catalyses (S)-4-hydroxy-2-oxopentanoate = acetaldehyde + pyruvate. The polypeptide is 4-hydroxy-2-oxovalerate aldolase 2 (Salinispora arenicola (strain CNS-205)).